The primary structure comprises 80 residues: MTNTKTLEANISFEEALKELEEIVKKIDNGQESLETAVKSFERGILLKNHCEKKLKEARLKIEKITKLANSTVVLEETEV.

This sequence belongs to the XseB family. Heterooligomer composed of large and small subunits.

The protein resides in the cytoplasm. It catalyses the reaction Exonucleolytic cleavage in either 5'- to 3'- or 3'- to 5'-direction to yield nucleoside 5'-phosphates.. In terms of biological role, bidirectionally degrades single-stranded DNA into large acid-insoluble oligonucleotides, which are then degraded further into small acid-soluble oligonucleotides. The chain is Exodeoxyribonuclease 7 small subunit from Rickettsia massiliae (strain Mtu5).